Consider the following 89-residue polypeptide: Small ribosomal subunit protein uS15 (89 aa).

It belongs to the universal ribosomal protein uS15 family. As to quaternary structure, part of the 30S ribosomal subunit. Forms a bridge to the 50S subunit in the 70S ribosome, contacting the 23S rRNA.

In terms of biological role, one of the primary rRNA binding proteins, it binds directly to 16S rRNA where it helps nucleate assembly of the platform of the 30S subunit by binding and bridging several RNA helices of the 16S rRNA. Forms an intersubunit bridge (bridge B4) with the 23S rRNA of the 50S subunit in the ribosome. This Exiguobacterium sibiricum (strain DSM 17290 / CCUG 55495 / CIP 109462 / JCM 13490 / 255-15) protein is Small ribosomal subunit protein uS15.